A 409-amino-acid polypeptide reads, in one-letter code: Effector protein BipC (409 aa).

Disordered stretches follow at residues 268–287 (RETG…RMSD) and 330–396 (SGGQ…VAND). Positions 360–369 (AQQTAMAAAS) are enriched in low complexity. The segment covering 370 to 382 (ARDEAAHRGRDAA) has biased composition (basic and acidic residues).

Belongs to the SctB/SipC family.

It is found in the secreted. The chain is Effector protein BipC (bipC) from Burkholderia thailandensis (strain ATCC 700388 / DSM 13276 / CCUG 48851 / CIP 106301 / E264).